The primary structure comprises 120 residues: Protein CcdB (120 aa).

In terms of domain architecture, Response regulatory spans 3 to 118 (RVLVVDDAKF…KVLEAVSRVM (116 aa)). Residue D53 is modified to 4-aspartylphosphate.

In Bacillus subtilis (strain 168), this protein is Protein CcdB (ccdB).